The primary structure comprises 849 residues: Villin-1 (849 aa).

5 Gelsolin-like repeats span residues 30 to 107 (IEKS…DKFL), 147 to 213 (RVTE…EDGK), 262 to 335 (VPVE…TVEF), 405 to 475 (QEQL…PEMF), and 527 to 566 (AIQV…DHNL). A disordered region spans residues 739-849 (ETPERSLRKS…AVATGTPRRL (111 aa)). 2 stretches are compositionally biased toward low complexity: residues 747-782 (KSSS…SAST) and 791-823 (PAAL…STPS).

It belongs to the villin/gelsolin family.

The protein resides in the cytoplasm. It is found in the cytoskeleton. Its function is as follows. Ca(2+)-independent actin-binding protein. Binds actin microfilaments (MFs). Involved in actin filament bundling, severing and capping. Caps the barbed end of actin filaments and protects them from disassembly. Promotes VLN3-mediated MF severing. In Oryza sativa subsp. indica (Rice), this protein is Villin-1.